The chain runs to 373 residues: Putative ribosome biogenesis protein C8F11.04 (373 aa).

The disordered stretch occupies residues arginine 265–histidine 373. The segment covering lysine 292 to lysine 320 has biased composition (basic and acidic residues). Over residues lysine 347 to threonine 359 the composition is skewed to polar residues. A compositionally biased stretch (basic residues) spans lysine 362–histidine 373.

Belongs to the universal ribosomal protein uL1 family. Highly divergent. As to quaternary structure, component of the 90S pre-ribosomes.

It localises to the nucleus. It is found in the nucleolus. Functionally, involved in rRNA-processing and ribosome biosynthesis. This Schizosaccharomyces pombe (strain 972 / ATCC 24843) (Fission yeast) protein is Putative ribosome biogenesis protein C8F11.04.